We begin with the raw amino-acid sequence, 101 residues long: NAD(P)H-quinone oxidoreductase subunit 4L, chloroplastic (101 aa).

The next 3 helical transmembrane spans lie at 2-22, 32-52, and 61-81; these read MLEH…YGLI, MCLE…SDFF, and IFSI…PAIV.

Belongs to the complex I subunit 4L family. In terms of assembly, NDH is composed of at least 16 different subunits, 5 of which are encoded in the nucleus.

It is found in the plastid. It localises to the chloroplast thylakoid membrane. It carries out the reaction a plastoquinone + NADH + (n+1) H(+)(in) = a plastoquinol + NAD(+) + n H(+)(out). It catalyses the reaction a plastoquinone + NADPH + (n+1) H(+)(in) = a plastoquinol + NADP(+) + n H(+)(out). NDH shuttles electrons from NAD(P)H:plastoquinone, via FMN and iron-sulfur (Fe-S) centers, to quinones in the photosynthetic chain and possibly in a chloroplast respiratory chain. The immediate electron acceptor for the enzyme in this species is believed to be plastoquinone. Couples the redox reaction to proton translocation, and thus conserves the redox energy in a proton gradient. This is NAD(P)H-quinone oxidoreductase subunit 4L, chloroplastic from Morus indica (Mulberry).